We begin with the raw amino-acid sequence, 126 residues long: Thiocyanate hydrolase subunit alpha (126 aa).

As to quaternary structure, heterododecamer consisting of 4 alpha, 4 beta, and 4 gamma subunits.

The enzyme catalyses thiocyanate + H2O + 2 H(+) = carbonyl sulfide + NH4(+). It functions in the pathway organosulfur degradation; thiocyanate degradation. Involved in the degradation of thiocyanate. This Thiobacillus thioparus protein is Thiocyanate hydrolase subunit alpha (scnA).